Consider the following 700-residue polypeptide: Stonustoxin subunit beta (700 aa).

The segment at 2 to 264 (PSDILVVAAL…EAPQLMADSS (263 aa)) is structural MACPF/CDC pore-forming domain. Positions 265 to 384 (TPILRKVRNT…DILTKAKPKV (120 aa)) are structural FAT domain. Residues 385–514 (IFNQGVLFKG…PYMPGVESIK (130 aa)) form a thioredoxin (THX) domain region. The 195-residue stretch at 506 to 700 (YMPGVESIKD…QKVNGQIKLL (195 aa)) folds into the B30.2/SPRY domain.

Belongs to the SNTX/VTX toxin family. In terms of assembly, heterodimer of alpha and beta subunits; non-covalently linked. In terms of processing, intrachain disulfide bonds may be present in the heterodimer. Post-translationally, not glycosylated. As to expression, expressed by the venom gland.

Its subcellular location is the secreted. This lethal (towards mammals) heterodimer induces hemolytic activities due to its ability to form pores in the cell membrane. The pore may be composed of 10 SNTX-alpha/beta heterodimers. The toxin elicits potent hypotension which is endothelium-dependent and appears to be mediated by the nitric oxide pathway and activation of potassium channels. In addition, it displays edema-inducing activities, increases vascular permeability. It also shows myotoxic activities and interferes irreversibly with neuromuscular function. It also induces irreversible platelet aggregation in rabbit or rat but not in human or mouse whole blood. In addition, it has been observed to increase spontaneous quantal acetylcholine release from isolated frog cutaneous pectoris motor endings. This chain is Stonustoxin subunit beta, found in Synanceia horrida (Estuarine stonefish).